The sequence spans 175 residues: MPLPEPLNIKAWVEENEHLLKPPVNNFCLHRGGFTVMIVGGPNERSDYHINQTPEYFYQYKGTMCLKVVDEGKFRDIYIREGDTFLLPPNVPHNPCRFENTVGIVVEQDRPKGVNDRIRWYCARCESIVCEEEFYLTDLGTQIKDAIVAFDSNIEAKTCKNCGHVNSSKREPAEF.

Arginine 45 is an O2 binding site. Fe cation is bound by residues histidine 49, glutamate 55, and histidine 93. Residue glutamate 55 coordinates substrate. Substrate-binding residues include arginine 97 and glutamate 107. 4 residues coordinate a divalent metal cation: cysteine 122, cysteine 125, cysteine 159, and cysteine 162.

Belongs to the 3-HAO family. Fe(2+) serves as cofactor.

The protein localises to the cytoplasm. The catalysed reaction is 3-hydroxyanthranilate + O2 = (2Z,4Z)-2-amino-3-carboxymuconate 6-semialdehyde. Its pathway is cofactor biosynthesis; NAD(+) biosynthesis; quinolinate from L-kynurenine: step 3/3. In terms of biological role, catalyzes the oxidative ring opening of 3-hydroxyanthranilate to 2-amino-3-carboxymuconate semialdehyde, which spontaneously cyclizes to quinolinate. This is 3-hydroxyanthranilate 3,4-dioxygenase from Lodderomyces elongisporus (strain ATCC 11503 / CBS 2605 / JCM 1781 / NBRC 1676 / NRRL YB-4239) (Yeast).